The primary structure comprises 34 residues: Non-toxic venom protein (34 aa).

The LCN-type CS-alpha/beta domain occupies 1-34; that stretch reads KEGYPTNSEGCKITXLFNDPYCKGXCINLSTQAD.

As to expression, expressed by the venom gland.

It localises to the secreted. In terms of biological role, does not cause symptoms of intoxication, paralysis or death in insects (A.domestica). This is Non-toxic venom protein from Rhopalurus junceus (Caribbean blue scorpion).